Reading from the N-terminus, the 421-residue chain is Synaptotagmin-12 (421 aa).

At Met1 to Gly18 the chain is on the vesicular side. A helical membrane pass occupies residues Trp19–Leu39. At Trp40–Asn421 the chain is on the cytoplasmic side. Ser97 carries the phosphoserine; by PKA modification. Ser99 and Ser214 each carry phosphoserine. C2 domains lie at Thr152–Leu272 and Ala283–His416.

This sequence belongs to the synaptotagmin family. Homodimer. Can also form heterodimers. Interacts with SYT1. Phosphorylation of Ser-97 is required for mossy-fiber long-term potentiation. In terms of tissue distribution, expressed in the brain, specifically by neurons in the hippocampus, and in the adrenal medulla (at protein level).

It is found in the cytoplasmic vesicle. It localises to the secretory vesicle. The protein localises to the synaptic vesicle membrane. In terms of biological role, synaptic vesicle phosphoprotein that enhances spontaneous neurotransmitter release but does not effect induced neurotransmitter release. Unlike other synaptotagmins, it does not bind Ca(2+) or phospholipids. Essential for mossy-fiber long-term potentiation in the hippocampus. This is Synaptotagmin-12 from Mus musculus (Mouse).